Reading from the N-terminus, the 631-residue chain is 1-deoxy-D-xylulose-5-phosphate synthase (631 aa).

Thiamine diphosphate contacts are provided by residues H74 and 115–117 (GHS). D146 provides a ligand contact to Mg(2+). Thiamine diphosphate contacts are provided by residues 147–148 (GA), N175, Y286, and E368. Residue N175 coordinates Mg(2+).

This sequence belongs to the transketolase family. DXPS subfamily. In terms of assembly, homodimer. The cofactor is Mg(2+). Thiamine diphosphate is required as a cofactor.

It carries out the reaction D-glyceraldehyde 3-phosphate + pyruvate + H(+) = 1-deoxy-D-xylulose 5-phosphate + CO2. Its pathway is metabolic intermediate biosynthesis; 1-deoxy-D-xylulose 5-phosphate biosynthesis; 1-deoxy-D-xylulose 5-phosphate from D-glyceraldehyde 3-phosphate and pyruvate: step 1/1. Its function is as follows. Catalyzes the acyloin condensation reaction between C atoms 2 and 3 of pyruvate and glyceraldehyde 3-phosphate to yield 1-deoxy-D-xylulose-5-phosphate (DXP). This chain is 1-deoxy-D-xylulose-5-phosphate synthase, found in Natranaerobius thermophilus (strain ATCC BAA-1301 / DSM 18059 / JW/NM-WN-LF).